The chain runs to 229 residues: Ribulose-phosphate 3-epimerase (229 aa).

Residue Ser13 coordinates substrate. The a divalent metal cation site is built by His36, Asp38, and His69. The Proton acceptor role is filled by Asp38. Residues His69, 145–148, 178–180, and 200–201 contribute to the substrate site; these read GFGG, DGG, and GS. Position 178 (Asp178) interacts with a divalent metal cation. The active-site Proton donor is the Asp178.

It belongs to the ribulose-phosphate 3-epimerase family. Requires a divalent metal cation as cofactor.

It carries out the reaction D-ribulose 5-phosphate = D-xylulose 5-phosphate. The protein operates within carbohydrate degradation. Functionally, catalyzes the reversible epimerization of D-ribulose 5-phosphate to D-xylulose 5-phosphate. The protein is Ribulose-phosphate 3-epimerase of Mycobacterium bovis (strain ATCC BAA-935 / AF2122/97).